The sequence spans 200 residues: Pyridoxal 5'-phosphate synthase subunit PdxT (200 aa).

An L-glutamine-binding site is contributed by 52-54; the sequence is GES. Cys-84 functions as the Nucleophile in the catalytic mechanism. Residues Arg-116 and 145-146 contribute to the L-glutamine site; that span reads IR. Residues His-181 and Glu-183 each act as charge relay system in the active site.

Belongs to the glutaminase PdxT/SNO family. In terms of assembly, in the presence of PdxS, forms a dodecamer of heterodimers. Only shows activity in the heterodimer.

It catalyses the reaction aldehydo-D-ribose 5-phosphate + D-glyceraldehyde 3-phosphate + L-glutamine = pyridoxal 5'-phosphate + L-glutamate + phosphate + 3 H2O + H(+). It carries out the reaction L-glutamine + H2O = L-glutamate + NH4(+). It functions in the pathway cofactor biosynthesis; pyridoxal 5'-phosphate biosynthesis. Its function is as follows. Catalyzes the hydrolysis of glutamine to glutamate and ammonia as part of the biosynthesis of pyridoxal 5'-phosphate. The resulting ammonia molecule is channeled to the active site of PdxS. The sequence is that of Pyridoxal 5'-phosphate synthase subunit PdxT from Saccharolobus islandicus (strain Y.N.15.51 / Yellowstone #2) (Sulfolobus islandicus).